We begin with the raw amino-acid sequence, 126 residues long: Aspartate 1-decarboxylase (126 aa).

The active-site Schiff-base intermediate with substrate; via pyruvic acid is the S25. At S25 the chain carries Pyruvic acid (Ser). Substrate is bound at residue T57. Y58 acts as the Proton donor in catalysis. Residue 73–75 (GAA) coordinates substrate.

Belongs to the PanD family. In terms of assembly, heterooctamer of four alpha and four beta subunits. Pyruvate serves as cofactor. Post-translationally, is synthesized initially as an inactive proenzyme, which is activated by self-cleavage at a specific serine bond to produce a beta-subunit with a hydroxyl group at its C-terminus and an alpha-subunit with a pyruvoyl group at its N-terminus.

It localises to the cytoplasm. The catalysed reaction is L-aspartate + H(+) = beta-alanine + CO2. The protein operates within cofactor biosynthesis; (R)-pantothenate biosynthesis; beta-alanine from L-aspartate: step 1/1. Functionally, catalyzes the pyruvoyl-dependent decarboxylation of aspartate to produce beta-alanine. In Methylococcus capsulatus (strain ATCC 33009 / NCIMB 11132 / Bath), this protein is Aspartate 1-decarboxylase.